Reading from the N-terminus, the 462-residue chain is A-type ATP synthase subunit B (462 aa).

It belongs to the ATPase alpha/beta chains family. Has multiple subunits with at least A(3), B(3), C, D, E, F, H, I and proteolipid K(x).

The protein resides in the cell membrane. Its function is as follows. Component of the A-type ATP synthase that produces ATP from ADP in the presence of a proton gradient across the membrane. The B chain is a regulatory subunit. In Methanococcus vannielii (strain ATCC 35089 / DSM 1224 / JCM 13029 / OCM 148 / SB), this protein is A-type ATP synthase subunit B.